A 210-amino-acid chain; its full sequence is MIKLFVGLGNPGPEYEATRHNAGFWWIDALARDWKLNLVPERSYHGLAARTNIGGQSVWLLEPQTFMNLSGKSVGALARFFKIAPEEILVVHDELDVVPGQAKLKFGGSHAGHNGLRDIHAQLGTGDYWRLRLGIGHPGVKSEVINWVLKKPLKEQREAIEDAIVRTLHAAPALVAGEMEKATLIIHTSKPPRPKPPRREPGDGGTPATA.

Position 15 (Tyr15) interacts with tRNA. The Proton acceptor role is filled by His20. TRNA contacts are provided by Phe66, Asn68, and Asn114. Residues 186–210 form a disordered region; the sequence is IHTSKPPRPKPPRREPGDGGTPATA.

It belongs to the PTH family. In terms of assembly, monomer.

It is found in the cytoplasm. The enzyme catalyses an N-acyl-L-alpha-aminoacyl-tRNA + H2O = an N-acyl-L-amino acid + a tRNA + H(+). Functionally, hydrolyzes ribosome-free peptidyl-tRNAs (with 1 or more amino acids incorporated), which drop off the ribosome during protein synthesis, or as a result of ribosome stalling. Catalyzes the release of premature peptidyl moieties from peptidyl-tRNA molecules trapped in stalled 50S ribosomal subunits, and thus maintains levels of free tRNAs and 50S ribosomes. The protein is Peptidyl-tRNA hydrolase of Variovorax paradoxus (strain S110).